Reading from the N-terminus, the 416-residue chain is 3-oxoacyl-[acyl-carrier-protein] synthase 1 (416 aa).

A Ketosynthase family 3 (KS3) domain is found at 11–415; it reads FPSVVVTAVT…GHNVALAFGR (405 aa). Residues Cys171, His311, and His345 each act as for beta-ketoacyl synthase activity in the active site. Substrate-binding residues include His311 and His345.

The protein belongs to the thiolase-like superfamily. Beta-ketoacyl-ACP synthases family.

The protein localises to the cytoplasm. It carries out the reaction an ultra-long-chain mono-unsaturated fatty acyl-[ACP] + malonyl-[ACP] + H(+) = a 3-oxo-ultra-long-chain mono-unsaturated fatty acyl-[ACP] + holo-[ACP] + CO2. Its pathway is lipid metabolism; mycolic acid biosynthesis. Part of the mycobacterial fatty acid elongation system FAS-II, which is involved in mycolic acid biosynthesis. Catalyzes the elongation of long chain acyl-ACP substrates by the addition of two carbons from malonyl-ACP to an acyl acceptor. Involved in the initial extension of the mycolate chain and forms monounsaturated fatty acids that averaged 40 carbons in length. This is 3-oxoacyl-[acyl-carrier-protein] synthase 1 (kasA) from Mycobacterium leprae (strain TN).